The following is a 73-amino-acid chain: Metallothionein-like protein type 2 (73 aa).

The protein belongs to the metallothionein superfamily. Type 15 family.

Metallothioneins have a high content of cysteine residues that bind various heavy metals. This is Metallothionein-like protein type 2 from Solanum lycopersicum (Tomato).